The chain runs to 750 residues: Photosystem I P700 chlorophyll a apoprotein A1 (750 aa).

A run of 8 helical transmembrane segments spans residues 70-93, 156-179, 195-219, 291-309, 346-369, 385-411, 433-455, and 531-549; these read VFSAHFGQLSIIFLWLSGMYFHGA, LYCTAIGALVFAALMLFAGWFHYH, LNHHLAGLLGLGSLSWAGHQIHVSL, IAHHHLAIAILFLIAGHMY, WHAQLALNLAMLGSLTIVVAHHMY, LSLFTHHMWIGGFLIVGAAAHAAIFMV, AIISHLNWACIFLGFHSFGLYIH, and FLVHHIHAFTIHVTVLILL. The [4Fe-4S] cluster site is built by Cys-573 and Cys-582. 2 helical membrane passes run 589–610 and 664–686; these read HVFLGLFWMYNSISVVIFHFSW and LSAYGLFFLGAHFVWAFSLMFLF. His-675 provides a ligand contact to chlorophyll a'. Met-683 and Tyr-691 together coordinate chlorophyll a. A phylloquinone-binding site is contributed by Trp-692. Residues 724–744 form a helical membrane-spanning segment; it reads AVGVTHYLLGGIATTWAFFLA.

It belongs to the PsaA/PsaB family. As to quaternary structure, the PsaA/B heterodimer binds the P700 chlorophyll special pair and subsequent electron acceptors. PSI consists of a core antenna complex that captures photons, and an electron transfer chain that converts photonic excitation into a charge separation. The eukaryotic PSI reaction center is composed of at least 11 subunits. P700 is a chlorophyll a/chlorophyll a' dimer, A0 is one or more chlorophyll a, A1 is one or both phylloquinones and FX is a shared 4Fe-4S iron-sulfur center. is required as a cofactor.

The protein resides in the plastid. The protein localises to the chloroplast thylakoid membrane. It catalyses the reaction reduced [plastocyanin] + hnu + oxidized [2Fe-2S]-[ferredoxin] = oxidized [plastocyanin] + reduced [2Fe-2S]-[ferredoxin]. PsaA and PsaB bind P700, the primary electron donor of photosystem I (PSI), as well as the electron acceptors A0, A1 and FX. PSI is a plastocyanin-ferredoxin oxidoreductase, converting photonic excitation into a charge separation, which transfers an electron from the donor P700 chlorophyll pair to the spectroscopically characterized acceptors A0, A1, FX, FA and FB in turn. Oxidized P700 is reduced on the lumenal side of the thylakoid membrane by plastocyanin. The polypeptide is Photosystem I P700 chlorophyll a apoprotein A1 (Acorus calamus (Sweet flag)).